Here is a 186-residue protein sequence, read N- to C-terminus: Large ribosomal subunit protein uL22 (186 aa).

Positions 159–186 (KAAENEPAKKKLSKKKLQRQKEKMMRNE) are disordered. Residues 177-186 (RQKEKMMRNE) show a composition bias toward basic and acidic residues.

This sequence belongs to the universal ribosomal protein uL22 family.

This chain is Large ribosomal subunit protein uL22 (RpL17), found in Aedes albopictus (Asian tiger mosquito).